Reading from the N-terminus, the 395-residue chain is ATP synthase subunit beta, chloroplastic (395 aa).

72–79 is a binding site for ATP; it reads GGAGVGKT.

This sequence belongs to the ATPase alpha/beta chains family. In terms of assembly, F-type ATPases have 2 components, CF(1) - the catalytic core - and CF(0) - the membrane proton channel. CF(1) has five subunits: alpha(3), beta(3), gamma(1), delta(1), epsilon(1). CF(0) has four main subunits: a(1), b(1), b'(1) and c(9-12).

Its subcellular location is the plastid. The protein resides in the chloroplast thylakoid membrane. It carries out the reaction ATP + H2O + 4 H(+)(in) = ADP + phosphate + 5 H(+)(out). In terms of biological role, produces ATP from ADP in the presence of a proton gradient across the membrane. The catalytic sites are hosted primarily by the beta subunits. This is ATP synthase subunit beta, chloroplastic from Microlepia platyphylla (Plate fern).